A 637-amino-acid chain; its full sequence is Threonine--tRNA ligase (637 aa).

The 61-residue stretch at 1–61 (MIKITLKDGK…NEDSTLEILT (61 aa)) folds into the TGS domain. The interval 242–532 (DHRKLGKELG…LTEHYAGAFP (291 aa)) is catalytic. Positions 333, 384, and 509 each coordinate Zn(2+).

This sequence belongs to the class-II aminoacyl-tRNA synthetase family. In terms of assembly, homodimer. Zn(2+) is required as a cofactor.

It localises to the cytoplasm. It carries out the reaction tRNA(Thr) + L-threonine + ATP = L-threonyl-tRNA(Thr) + AMP + diphosphate + H(+). Functionally, catalyzes the attachment of threonine to tRNA(Thr) in a two-step reaction: L-threonine is first activated by ATP to form Thr-AMP and then transferred to the acceptor end of tRNA(Thr). Also edits incorrectly charged L-seryl-tRNA(Thr). The sequence is that of Threonine--tRNA ligase from Clostridium novyi (strain NT).